We begin with the raw amino-acid sequence, 296 residues long: ATP synthase gamma chain (296 aa).

It belongs to the ATPase gamma chain family. In terms of assembly, F-type ATPases have 2 components, CF(1) - the catalytic core - and CF(0) - the membrane proton channel. CF(1) has five subunits: alpha(3), beta(3), gamma(1), delta(1), epsilon(1). CF(0) has three main subunits: a, b and c.

It is found in the cell inner membrane. Its function is as follows. Produces ATP from ADP in the presence of a proton gradient across the membrane. The gamma chain is believed to be important in regulating ATPase activity and the flow of protons through the CF(0) complex. The protein is ATP synthase gamma chain of Methylorubrum extorquens (strain CM4 / NCIMB 13688) (Methylobacterium extorquens).